An 845-amino-acid chain; its full sequence is MSASATRSRNKQSKLRDDERLDISKDEFNRIQEAFGQEEFRKLFFDYVEEIQDPENRKIYEEEITQLEKERGVEVRFIHPKPGFVIKTALDGELKCFINIAGSEEIERPKNEVATDPSSGNRGLSWSIPMAQTSSRDDCDAKNNHCKVFDVVFHPDALHLAKRNKQFRQCLIDTALDAVEREYKVSLDRANLKFPKLDYKGIPRPTVIRKLADNPTAEEQEPHPLAHMFPTQPPAPGKPEPRVLPLKTKPTPVPEFTVPRYSIKHSHDVDLSEYTDELDAKLHVTVPRALVVEIELPLLRSTAECQLDVTSKSVYLFSERQGAKYRLKLDLPFTVDDKAGQARFDTDLRRLSITLPVVRKSSKEQAQMHETLRHFSREDSGVELHSNSESPVEEDPDGELSDSKADISDISSPTAAPVRHSNSPFLKSSVHYQLPSKFDCNVLDNVMAFVLHVPNVQPDSIEQLREQRSLHLQFATIGSGYYPTHYAFYVELPAEHEDSAIESVEAEAWDNNVVLKLCLTSQSETPASYLAGLDATELKEYPVHGQYNVKSKEKVIARKENAPFEIKFEHNQEGQALKVSIRPGTKEEEKENQDQEPEIDQQHQQQVQNKKPGKKQRKRNKKERSLSESACADMILQEPLTKNSELQPKSTFNLPQRKQRSYSECNDSTGGSHRGILKRFSRYGPRPSMSDSCSSIDDCSSYSCSVDASGTSLFSHSFGGIPEEDRSDAGLSESCKKTVRFNDHIMKQVFRLDSSILGQRKKNQKRRDLKLRAQHRRLSEGDSVDYEESRGSALKQQENQSRNCNKPKGVSVLHDSGLDLTGAPGAHSNNNESEAKNAMMFEMDD.

A compositionally biased stretch (basic and acidic residues) spans 362–382 (SKEQAQMHETLRHFSREDSGV). Disordered stretches follow at residues 362 to 420 (SKEQ…PVRH), 575 to 691 (QALK…SMSD), and 773 to 845 (AQHR…EMDD). Residue Ser-380 is modified to Phosphoserine. Residues 391 to 400 (PVEEDPDGEL) are compositionally biased toward acidic residues. Basic and acidic residues predominate over residues 584–593 (GTKEEEKENQ). Residues 611-622 (KPGKKQRKRNKK) are compositionally biased toward basic residues. Residues 640 to 671 (LTKNSELQPKSTFNLPQRKQRSYSECNDSTGG) are compositionally biased toward polar residues. A Phosphoserine modification is found at Ser-779. The segment covering 794–804 (LKQQENQSRNC) has biased composition (polar residues).

Belongs to the PIH1 family. Kintoun subfamily. Interacts with Pp1alpha-96A, Pp1-87B, Pp1-13C and flw.

It localises to the cytoplasm. Required for cytoplasmic pre-assembly of axonemal dyneins, thereby playing a central role in motility in cilia and flagella. Involved in pre-assembly of dynein arm complexes in the cytoplasm before intraflagellar transport loads them for the ciliary compartment. This is Protein kintoun from Drosophila erecta (Fruit fly).